The primary structure comprises 742 residues: 5-methyltetrahydropteroyltriglutamate--homocysteine methyltransferase (742 aa).

5-methyltetrahydropteroyltri-L-glutamate contacts are provided by residues 18 to 21 and Lys112; that span reads REWK. L-homocysteine-binding positions include 420–422 and Glu473; that span reads IGS. Residues 420 to 422 and Glu473 each bind L-methionine; that span reads IGS. Trp550 is a binding site for 5-methyltetrahydropteroyltri-L-glutamate. Residue Asp588 coordinates L-homocysteine. Asp588 provides a ligand contact to L-methionine. Glu594 serves as a coordination point for 5-methyltetrahydropteroyltri-L-glutamate. Positions 630, 632, and 654 each coordinate Zn(2+). The active-site Proton donor is the His683. Cys715 provides a ligand contact to Zn(2+).

It belongs to the vitamin-B12 independent methionine synthase family. The cofactor is Zn(2+).

It carries out the reaction 5-methyltetrahydropteroyltri-L-glutamate + L-homocysteine = tetrahydropteroyltri-L-glutamate + L-methionine. Its pathway is amino-acid biosynthesis; L-methionine biosynthesis via de novo pathway; L-methionine from L-homocysteine (MetE route): step 1/1. Functionally, catalyzes the transfer of a methyl group from 5-methyltetrahydrofolate to homocysteine resulting in methionine formation. The protein is 5-methyltetrahydropteroyltriglutamate--homocysteine methyltransferase of Staphylococcus aureus (strain MRSA252).